The sequence spans 2300 residues: Protein hobbit (2300 aa).

A signal peptide spans 1–21; that stretch reads MMLQLLLFCLALFIFVYWVLP. Residues 23–117 form a transmembrane domain region; sequence GISWYLVKRF…LRRTQTLAGK (95 aa). 2 disordered regions span residues 269-290 and 2111-2148; these read TSTG…RSYD and VSDE…GKKG. A compositionally biased stretch (polar residues) spans 270–282; the sequence is STGQPSRRSTQGL. The required for endoplasmic reticulum-cell membrane contact sites location and binding to phosphatidylinositols stretch occupies residues 1750 to 2300; it reads VVSETVGAFL…ASSGKRSGND (551 aa). Residues 2119–2140 show a composition bias toward low complexity; that stretch reads ASTSSASTTNLQAKSSTSSSTK.

The protein localises to the cell membrane. It is found in the endoplasmic reticulum membrane. The protein resides in the mitochondrion membrane. Its function is as follows. Tube-forming lipid transport protein which binds to phosphatidylinositols and affects phosphatidylinositol-4,5-bisphosphate (PtdIns-4,5-P2) distribution. The protein is Protein hobbit of Drosophila melanogaster (Fruit fly).